The chain runs to 1832 residues: Putative transcription factor capicua (1832 aa).

2 positions are modified to phosphoserine: serine 41 and serine 49. 15 disordered regions span residues alanine 66 to serine 121, serine 135 to histidine 227, glutamine 323 to asparagine 353, asparagine 389 to arginine 427, aspartate 444 to proline 493, aspartate 563 to glycine 619, arginine 690 to glutamate 739, glutamine 784 to proline 845, proline 874 to glutamate 938, threonine 1069 to cysteine 1105, glycine 1151 to threonine 1178, aspartate 1457 to alanine 1602, glutamine 1632 to leucine 1668, leucine 1701 to valine 1733, and alanine 1789 to serine 1817. The span at asparagine 96–serine 121 shows a compositional bias: low complexity. Pro residues predominate over residues proline 172–proline 186. Composition is skewed to low complexity over residues proline 187–serine 203, glutamine 211–glutamine 223, and glutamine 323–glutamine 342. The span at glutamate 397–phenylalanine 408 shows a compositional bias: acidic residues. Polar residues predominate over residues glutamate 409–glutamine 422. Positions alanine 446–glutamine 484 are enriched in low complexity. The HMG box DNA-binding region spans isoleucine 490–lysine 558. Over residues glycine 610–glycine 619 the composition is skewed to gly residues. The segment at glycine 834–tyrosine 1832 is interaction with gro. Residues glutamate 903–aspartate 914 are compositionally biased toward basic and acidic residues. The segment covering glutamine 915–glutamate 938 has biased composition (acidic residues). Polar residues predominate over residues asparagine 1078 to phenylalanine 1091. Over residues proline 1092–cysteine 1105 the composition is skewed to low complexity. The span at glycine 1462–glycine 1471 shows a compositional bias: low complexity. The segment covering leucine 1503–histidine 1525 has biased composition (polar residues). Low complexity predominate over residues asparagine 1547–proline 1589. Threonine 1716 is modified (phosphothreonine). Over residues aspartate 1724–valine 1733 the composition is skewed to basic and acidic residues. The segment covering alanine 1789–asparagine 1799 has biased composition (polar residues). The segment covering threonine 1800–serine 1817 has biased composition (low complexity).

As to quaternary structure, interacts with gro. Expressed in the central region of embryos. Also expressed in ovarian follicle cells, the wing imaginal disks and the wing pouch.

The protein resides in the nucleus. Its function is as follows. Transcriptional repressor required for the specification of numerous cell types during embryonic development. Required for terminal patterning of early embryos. May associate with gro to repress tll and hkb, restricting their expression to embryonic terminal poles where they initiate correct development of head and tail structures. Required for dorsoventral patterning of oocytes and early embryos. Cooperates with dl to repress zen and other dorsal specific genes within the embryo and promotes expression of the ventralizing factor pip in ovarian follicle cells. Required during wing development for the specification of intervein areas, where it mediates localized repression of vein specific genes such as aos, dpp and vvl. This is Putative transcription factor capicua (cic) from Drosophila melanogaster (Fruit fly).